A 244-amino-acid polypeptide reads, in one-letter code: Venom nerve growth factor 2 (244 aa).

The N-terminal stretch at 1 to 18 (MSMLCYTLIIAFLIGTWA) is a signal peptide. The propeptide occupies 19-125 (APKSEDNVPL…TLNRNIRAKR (107 aa)). Positions 47-66 (GLKTSRNTDQRHPAPKKAED) are enriched in basic and acidic residues. Residues 47–67 (GLKTSRNTDQRHPAPKKAEDQ) are disordered. Intrachain disulfides connect Cys139–Cys205, Cys181–Cys233, and Cys193–Cys235.

Belongs to the NGF-beta family. As to quaternary structure, homodimer; non-covalently linked. In terms of tissue distribution, expressed by the venom gland.

The protein resides in the secreted. Nerve growth factor is important for the development and maintenance of the sympathetic and sensory nervous systems. It stimulates division and differentiation of sympathetic and embryonic sensory neurons as well as basal forebrain cholinergic neurons in the brain. Its relevance in the snake venom is not clear. However, it has been shown to inhibit metalloproteinase-dependent proteolysis of platelet glycoprotein Ib alpha, suggesting a metalloproteinase inhibition to prevent metalloprotease autodigestion and/or protection against prey proteases. Binds a lipid between the two protein chains in the homodimer. The lipid-bound form promotes histamine relase from mouse mast cells, contrary to the lipid-free form. The protein is Venom nerve growth factor 2 of Tropidechis carinatus (Australian rough-scaled snake).